Consider the following 60-residue polypeptide: Small, acid-soluble spore protein H (60 aa).

This sequence belongs to the SspH family.

The protein resides in the spore core. This is Small, acid-soluble spore protein H from Halalkalibacterium halodurans (strain ATCC BAA-125 / DSM 18197 / FERM 7344 / JCM 9153 / C-125) (Bacillus halodurans).